A 479-amino-acid polypeptide reads, in one-letter code: Glycogen synthase (479 aa).

Residue K15 coordinates ADP-alpha-D-glucose.

This sequence belongs to the glycosyltransferase 1 family. Bacterial/plant glycogen synthase subfamily.

The enzyme catalyses [(1-&gt;4)-alpha-D-glucosyl](n) + ADP-alpha-D-glucose = [(1-&gt;4)-alpha-D-glucosyl](n+1) + ADP + H(+). Its pathway is glycan biosynthesis; glycogen biosynthesis. Functionally, synthesizes alpha-1,4-glucan chains using ADP-glucose. In Pectobacterium atrosepticum (strain SCRI 1043 / ATCC BAA-672) (Erwinia carotovora subsp. atroseptica), this protein is Glycogen synthase.